The following is a 377-amino-acid chain: Adenosine 3'-phospho 5'-phosphosulfate transporter 2 (377 aa).

The next 10 helical transmembrane spans lie at 50 to 70 (LCCG…ELIF), 77 to 97 (PYGW…GYIE), 115 to 135 (ALLA…VGYL), 138 to 158 (PTQV…SVLI), 164 to 184 (GPMD…FTLA), 195 to 215 (FGVF…NVQE), 228 to 248 (VVIY…LLSG), 266 to 286 (GYAF…LTLV), 293 to 313 (LAAT…FVFF), and 317 to 337 (FTIQ…LNVY).

Belongs to the nucleotide-sugar transporter family. SLC35B subfamily.

It is found in the golgi apparatus membrane. In terms of biological role, mediates the transport of adenosine 3'-phospho 5'-phosphosulfate (PAPS), from cytosol into Golgi. PAPS is a universal sulfuryl donor for sulfation events that take place in the Golgi. Essential for viability. Involved in glycosaminoglycan synthesis and the subsequent signaling. May be involved in hh and dpp signaling by controlling the sulfation of heparan sulfate (HS). The polypeptide is Adenosine 3'-phospho 5'-phosphosulfate transporter 2 (Anopheles gambiae (African malaria mosquito)).